A 217-amino-acid polypeptide reads, in one-letter code: Proteasome subunit beta (217 aa).

Residues 1–14 (MIANNDQYKEYMKG) constitute a propeptide, removed in mature form; by autocatalysis. Threonine 15 (nucleophile) is an active-site residue.

This sequence belongs to the peptidase T1B family. As to quaternary structure, the 20S proteasome core is composed of 14 alpha and 14 beta subunits that assemble into four stacked heptameric rings, resulting in a barrel-shaped structure. The two inner rings, each composed of seven catalytic beta subunits, are sandwiched by two outer rings, each composed of seven alpha subunits. The catalytic chamber with the active sites is on the inside of the barrel. Has a gated structure, the ends of the cylinder being occluded by the N-termini of the alpha-subunits. Is capped at one or both ends by the proteasome regulatory ATPase, PAN.

The protein localises to the cytoplasm. The catalysed reaction is Cleavage of peptide bonds with very broad specificity.. The formation of the proteasomal ATPase PAN-20S proteasome complex, via the docking of the C-termini of PAN into the intersubunit pockets in the alpha-rings, triggers opening of the gate for substrate entry. Interconversion between the open-gate and close-gate conformations leads to a dynamic regulation of the 20S proteasome proteolysis activity. Its function is as follows. Component of the proteasome core, a large protease complex with broad specificity involved in protein degradation. This chain is Proteasome subunit beta, found in Methanococcus aeolicus (strain ATCC BAA-1280 / DSM 17508 / OCM 812 / Nankai-3).